The primary structure comprises 137 residues: Ribosome-binding factor A (137 aa).

It belongs to the RbfA family. In terms of assembly, monomer. Binds 30S ribosomal subunits, but not 50S ribosomal subunits or 70S ribosomes.

It is found in the cytoplasm. Its function is as follows. One of several proteins that assist in the late maturation steps of the functional core of the 30S ribosomal subunit. Associates with free 30S ribosomal subunits (but not with 30S subunits that are part of 70S ribosomes or polysomes). Required for efficient processing of 16S rRNA. May interact with the 5'-terminal helix region of 16S rRNA. In Cereibacter sphaeroides (strain KD131 / KCTC 12085) (Rhodobacter sphaeroides), this protein is Ribosome-binding factor A.